The chain runs to 116 residues: UPF0342 protein LBA1592 (116 aa).

Belongs to the UPF0342 family.

This is UPF0342 protein LBA1592 from Lactobacillus acidophilus (strain ATCC 700396 / NCK56 / N2 / NCFM).